A 121-amino-acid chain; its full sequence is Large ribosomal subunit protein bL12 (121 aa).

This sequence belongs to the bacterial ribosomal protein bL12 family. In terms of assembly, homodimer. Part of the ribosomal stalk of the 50S ribosomal subunit. Forms a multimeric L10(L12)X complex, where L10 forms an elongated spine to which 2 to 4 L12 dimers bind in a sequential fashion. Binds GTP-bound translation factors.

Its function is as follows. Forms part of the ribosomal stalk which helps the ribosome interact with GTP-bound translation factors. Is thus essential for accurate translation. The sequence is that of Large ribosomal subunit protein bL12 from Leuconostoc mesenteroides subsp. mesenteroides (strain ATCC 8293 / DSM 20343 / BCRC 11652 / CCM 1803 / JCM 6124 / NCDO 523 / NBRC 100496 / NCIMB 8023 / NCTC 12954 / NRRL B-1118 / 37Y).